Reading from the N-terminus, the 250-residue chain is Ribosomal RNA small subunit methyltransferase J (250 aa).

Residues 96–97 (RD) and aspartate 168 contribute to the S-adenosyl-L-methionine site.

This sequence belongs to the methyltransferase superfamily. RsmJ family.

It is found in the cytoplasm. The catalysed reaction is guanosine(1516) in 16S rRNA + S-adenosyl-L-methionine = N(2)-methylguanosine(1516) in 16S rRNA + S-adenosyl-L-homocysteine + H(+). In terms of biological role, specifically methylates the guanosine in position 1516 of 16S rRNA. The sequence is that of Ribosomal RNA small subunit methyltransferase J from Neisseria gonorrhoeae (strain NCCP11945).